Here is a 293-residue protein sequence, read N- to C-terminus: Homoserine kinase (293 aa).

Residue 84–94 coordinates ATP; sequence PLSRGLGSSSA.

It belongs to the GHMP kinase family. Homoserine kinase subfamily.

Its subcellular location is the cytoplasm. It carries out the reaction L-homoserine + ATP = O-phospho-L-homoserine + ADP + H(+). The protein operates within amino-acid biosynthesis; L-threonine biosynthesis; L-threonine from L-aspartate: step 4/5. In terms of biological role, catalyzes the ATP-dependent phosphorylation of L-homoserine to L-homoserine phosphate. The polypeptide is Homoserine kinase (Nitratiruptor sp. (strain SB155-2)).